Here is a 60-residue protein sequence, read N- to C-terminus: MDTRLLELLVCPVTKGPLEYNREKQELTSRSARLAYPVRDGVPILLESEARTLSDEELGL.

The protein belongs to the UPF0434 family.

This is UPF0434 protein Rfer_3156 from Albidiferax ferrireducens (strain ATCC BAA-621 / DSM 15236 / T118) (Rhodoferax ferrireducens).